The sequence spans 1139 residues: Phospholipid-transporting ATPase tat-1 (1139 aa).

Transmembrane regions (helical) follow at residues 78–98, 276–296, and 318–338; these read YTTA…EIFE, IIFL…GSEI, and SFLW…PISL. Aspartate 388 functions as the 4-aspartylphosphate intermediate in the catalytic mechanism. Helical transmembrane passes span 831-851, 855-875, 901-921, 935-955, 972-992, and 1013-1033; these read ICLY…GQTI, WTIG…LGLF, IGNF…LFFL, GLTG…VATV, VACI…SLVF, and YTFW…DLVI.

The protein belongs to the cation transport ATPase (P-type) (TC 3.A.3) family. Type IV subfamily.

It localises to the cell membrane. The protein localises to the early endosome membrane. The protein resides in the recycling endosome membrane. The catalysed reaction is ATP + H2O + phospholipidSide 1 = ADP + phosphate + phospholipidSide 2.. It carries out the reaction a 1,2-diacyl-sn-glycero-3-phospho-L-serine(out) + ATP + H2O = a 1,2-diacyl-sn-glycero-3-phospho-L-serine(in) + ADP + phosphate + H(+). Its function is as follows. Transports phosphatidylserine from the outer to the inner leaflet of the plasma membrane, thereby maintaining the enrichment of this phospholipid in the inner leaflet. Ectopic exposure of phosphatidylserine on the cell surface may result in removal of living cells by neighboring phagocytes. Regulation of the phosphatidylserine distribution in plasma membranes is likely to help in the maintenance and control of the membrane surface charge. Plays a role in the formation of the tubular membrane structure and in membrane trafficking and is specifically involved in the recycling and degradation of endocytic cargo, likely with its chaperone protein chat-1. This Caenorhabditis elegans protein is Phospholipid-transporting ATPase tat-1 (tat-1).